Reading from the N-terminus, the 240-residue chain is 2,3,4,5-tetrahydropyridine-2,6-dicarboxylate N-acetyltransferase (240 aa).

It belongs to the transferase hexapeptide repeat family. DapH subfamily.

It catalyses the reaction (S)-2,3,4,5-tetrahydrodipicolinate + acetyl-CoA + H2O = L-2-acetamido-6-oxoheptanedioate + CoA. The protein operates within amino-acid biosynthesis; L-lysine biosynthesis via DAP pathway; LL-2,6-diaminopimelate from (S)-tetrahydrodipicolinate (acetylase route): step 1/3. Its function is as follows. Catalyzes the transfer of an acetyl group from acetyl-CoA to tetrahydrodipicolinate. This chain is 2,3,4,5-tetrahydropyridine-2,6-dicarboxylate N-acetyltransferase, found in Bacillus anthracis (strain A0248).